An 812-amino-acid polypeptide reads, in one-letter code: Mitochondrial intermediate peptidase (812 aa).

The transit peptide at 1–29 (MRLSRQLLRSTPFLTRAKPVSGKVSHFRS) directs the protein to the mitochondrion. A disordered region spans residues 19 to 49 (PVSGKVSHFRSRTDLKGGSSNSSKSPDSVGD). The segment covering 37 to 46 (SSNSSKSPDS) has biased composition (low complexity). His-595 contacts Zn(2+). Residue Glu-596 is part of the active site. Positions 599 and 602 each coordinate Zn(2+).

It belongs to the peptidase M3 family. Zn(2+) serves as cofactor.

It localises to the mitochondrion matrix. It carries out the reaction Release of an N-terminal octapeptide as second stage of processing of some proteins imported into the mitochondrion.. Cleaves proteins, imported into the mitochondrion, to their mature size. While most mitochondrial precursor proteins are processed to the mature form in one step by mitochondrial processing peptidase (MPP), the sequential cleavage by MIP of an octapeptide after initial processing by MPP is a required step for a subgroup of nuclear-encoded precursor proteins destined for the matrix or the inner membrane. In Scheffersomyces stipitis (strain ATCC 58785 / CBS 6054 / NBRC 10063 / NRRL Y-11545) (Yeast), this protein is Mitochondrial intermediate peptidase (OCT1).